The sequence spans 129 residues: Small ribosomal subunit protein uS11 (129 aa).

Belongs to the universal ribosomal protein uS11 family. As to quaternary structure, part of the 30S ribosomal subunit. Interacts with proteins S7 and S18. Binds to IF-3.

Its function is as follows. Located on the platform of the 30S subunit, it bridges several disparate RNA helices of the 16S rRNA. Forms part of the Shine-Dalgarno cleft in the 70S ribosome. In Rhodopseudomonas palustris (strain BisB18), this protein is Small ribosomal subunit protein uS11.